We begin with the raw amino-acid sequence, 85 residues long: U4-theraphotoxin-Hhn1ab (85 aa).

An N-terminal signal peptide occupies residues 1 to 22 (MKVTLIAILTCAAVLVLHTTAA). Residues 23 to 48 (EELEAESQLMEVGMPDTELAAVDEER) constitute a propeptide that is removed on maturation. Cystine bridges form between cysteine 56–cysteine 77 and cysteine 71–cysteine 82.

This sequence belongs to the neurotoxin 12 (Hwtx-2) family. 02 (Hwtx-2) subfamily. In terms of tissue distribution, expressed by the venom gland.

Its subcellular location is the secreted. Postsynaptic neurotoxin. The polypeptide is U4-theraphotoxin-Hhn1ab (Cyriopagopus hainanus (Chinese bird spider)).